The primary structure comprises 637 residues: MAQSTTTSPDGGTTFEHLWSSLEPDSTYFDLPQSSRGNNEVVGGTDSSMDVFHLEGMTTSVMAQFNLLSSTMDQMSSRAASASPYTPEHAASVPTHSPYAQPSSTFDTMSPAPVIPSNTDYPGPHHFEVTFQQSSTAKSATWTYSPLLKKLYCQIAKTCPIQIKVSAPPPPGTAIRAMPVYKKAEHVTDIVKRCPNHELGRDFNEGQSAPASHLIRVEGNNLSQYVDDPVTGRQSVVVPYEPPQVGTEFTTILYNFMCNSSCVGGMNRRPILIIITLETRDGQVLGRRSFEGRICACPGRDRKADEDHYREQQALNESSAKNGAASKRAFKQSPPAVPALGPGVKKRRHGDEDTYYLQVRGRENFEILMKLKESLELMELVPQPLVDSYRQQQQLLQRPSHLQPPSYGPVLSPMNKVHGGVNKLPSVNQLVGQPPPHSSAATPNLGPVGSGMLNNHGHAVPANSEMTSSHGTQSMVSGSHCTPPPPYHADPSLVSFLTGLGCPNCIEYFTSQGLQSIYHLQNLTIEDLGALKIPEQYRMTIWRGLQDLKQGHDYGAAAQQLLRSSNAAAISIGGSGELQRQRVMEAVHFRVRHTITIPNRGGPGAGPDEWADFGFDLPDCKARKQPIKEEFTEAEIH.

The tract at residues 1-46 (MAQSTTTSPDGGTTFEHLWSSLEPDSTYFDLPQSSRGNNEVVGGTD) is transactivation. The residue at position 27 (Thr27) is a Phosphothreonine. Tyr28 is subject to Phosphotyrosine; by SRC and HCK. The segment at 78–104 (RAASASPYTPEHAASVPTHSPYAQPSS) is disordered. A compositionally biased stretch (polar residues) spans 94–104 (PTHSPYAQPSS). The residue at position 99 (Tyr99) is a Phosphotyrosine. The interval 131–310 (FQQSSTAKSA…DRKADEDHYR (180 aa)) is DNA-binding. Cys194, His197, Cys258, and Cys262 together coordinate Zn(2+). The span at 301 to 311 (DRKADEDHYRE) shows a compositional bias: basic and acidic residues. Residues 301-351 (DRKADEDHYREQQALNESSAKNGAASKRAFKQSPPAVPALGPGVKKRRHGD) are disordered. The interaction with HIPK2 stretch occupies residues 345 to 380 (KKRRHGDEDTYYLQVRGRENFEILMKLKESLELMEL). The tract at residues 345–386 (KKRRHGDEDTYYLQVRGRENFEILMKLKESLELMELVPQPLV) is oligomerization. Residues 483-487 (PPPPY) carry the PPxY motif motif. Residues 485-551 (PPYHADPSLV…WRGLQDLKQG (67 aa)) enclose the SAM domain. Lys628 participates in a covalent cross-link: Glycyl lysine isopeptide (Lys-Gly) (interchain with G-Cter in SUMO); in isoform Alpha. A Glycyl lysine isopeptide (Lys-Gly) (interchain with G-Cter in SUMO2) cross-link involves residue Lys628.

The protein belongs to the p53 family. In terms of assembly, found in a complex with p53/TP53 and CABLES1. The C-terminal oligomerization domain binds to the ABL1 tyrosine kinase SH3 domain. Interacts with HECW2. Isoforms Alpha and Beta interact with HIPK2. Isoform Alpha interacts with RANBP9. Interacts with WWOX. Isoform Beta interacts homotypically and with p53, whereas isoform Alpha does not. Interacts (via SAM domain) with FBXO45 (via B30.2/SPRY domain). Interacts with YAP1 (phosphorylated form). Interacts with HCK (via SH3 domain); this inhibits TP73 activity and degradation. Requires Zn(2+) as cofactor. Isoform Alpha (but not isoform Beta) is sumoylated on Lys-628, which potentiates proteasomal degradation but does not affect transcriptional activity. Post-translationally, polyubiquitinated by RCHY1/PIRH2; leading to its degradation by the proteasome.

It localises to the nucleus. The protein localises to the cytoplasm. Participates in the apoptotic response to DNA damage. May be a tumor suppressor protein. Is an activator of FOXJ1 expression, essential for the positive regulation of lung ciliated cell differentiation. In Chlorocebus aethiops (Green monkey), this protein is Tumor protein p73 (TP73).